We begin with the raw amino-acid sequence, 614 residues long: Sodium- and chloride-dependent betaine transporter (614 aa).

The Cytoplasmic segment spans residues 1–44; the sequence is MDRKVAVHEDGYPVVSWVPEEGEMMDQKGKDQVKDRGQWTNKME. 3 consecutive transmembrane segments (helical) span residues 45–65, 73–92, and 117–137; these read FVLSVAGEIIGLGNVWRFPYL, AFFIPYFIFFFSCGIPVFFL, and GIGMASVVIESYLNIYYIIIL. The Extracellular portion of the chain corresponds to 138–210; the sequence is AWALFYLFSS…SGIHDLGSLR (73 aa). A disulfide bond links Cys-157 and Cys-166. Asn-171 and Asn-183 each carry an N-linked (GlcNAc...) asparagine glycan. 9 consecutive transmembrane segments (helical) span residues 211–229, 238–255, 291–308, 320–341, 374–393, 423–441, 458–478, 499–518, and 538–556; these read WELALCLLLAWIICYFCIW, VVYFTATFPYLMLIILLI, IFFSFAICQGCLTALGSY, IALCFLNSATSFVAGFVVFSIL, MPLSQLWSCLFFIMLLFLGL, VLILAISVLCYLMGLLLVT, GICLLFLSLFEVICIGWVYGA, ISWLFLTPGLCLATFFFSLS, and IGWLLAFSSMACVPLFIII. The Cytoplasmic portion of the chain corresponds to 557–614; the sequence is TFLKTQGSFKKRLRRLITPDPSLPQPGRRPPQDGSSAQNCSSSPAKQELIAWEKETHL. Residues 574-602 form a disordered region; it reads TPDPSLPQPGRRPPQDGSSAQNCSSSPAK. Polar residues predominate over residues 589–601; sequence DGSSAQNCSSSPA.

It belongs to the sodium:neurotransmitter symporter (SNF) (TC 2.A.22) family. SLC6A12 subfamily. As to quaternary structure, interacts with LIN7C. As to expression, predominantly expressed in the liver (sinusoidal hepatocyte plasma membranes), also present in the renal medulla, where it localizes to the basolateral membranes of collecting ducts (particularly at the papilla tip) and the thick ascending limbs of Henle (at protein level). Some expression is detected in the leptomeninges, but no expression is detected in brain parenchyma, brain blood vessels, ependymal cells, the renal cortex and the intestine.

Its subcellular location is the basolateral cell membrane. It localises to the cell membrane. The catalysed reaction is 4-aminobutanoate(out) + chloride(out) + 3 Na(+)(out) = 4-aminobutanoate(in) + chloride(in) + 3 Na(+)(in). It catalyses the reaction glycine betaine(out) + 2 chloride(out) + 3 Na(+)(out) = glycine betaine(in) + 2 chloride(in) + 3 Na(+)(in). In terms of biological role, transporter that mediates cellular uptake of betaine and GABA in a sodium- and chloride-dependent process. May have a role in regulation of GABAergic transmission in the brain through the reuptake of GABA into presynaptic terminals, as well as in osmotic regulation. Probably also involved in renal and hepatic osmotic regulation. This is Sodium- and chloride-dependent betaine transporter (Slc6a12) from Mus musculus (Mouse).